The following is a 217-amino-acid chain: Adenylate kinase (217 aa).

ATP is bound at residue 10–15 (GAGKGT). Residues 30 to 59 (STGDIFRANIKNNTELGAKAKEYMDQGLLV) are NMP. AMP contacts are provided by residues Thr31, Arg36, 57 to 59 (LLV), 85 to 88 (GFPR), and Gln92. Residues 126-163 (GRRACVSCGGTYHVVFTPTKKEGICDACGGELTIRDDD) are LID. Position 127 (Arg127) interacts with ATP. Residues Cys130 and Cys133 each contribute to the Zn(2+) site. 136–137 (TY) is an ATP binding site. Zn(2+) contacts are provided by Cys150 and Cys153. Positions 160 and 171 each coordinate AMP. Residue Lys199 participates in ATP binding.

It belongs to the adenylate kinase family. In terms of assembly, monomer.

The protein resides in the cytoplasm. It carries out the reaction AMP + ATP = 2 ADP. It participates in purine metabolism; AMP biosynthesis via salvage pathway; AMP from ADP: step 1/1. Its function is as follows. Catalyzes the reversible transfer of the terminal phosphate group between ATP and AMP. Plays an important role in cellular energy homeostasis and in adenine nucleotide metabolism. In Lachnoclostridium phytofermentans (strain ATCC 700394 / DSM 18823 / ISDg) (Clostridium phytofermentans), this protein is Adenylate kinase.